An 80-amino-acid polypeptide reads, in one-letter code: Small ribosomal subunit protein bS18 (80 aa).

It belongs to the bacterial ribosomal protein bS18 family. In terms of assembly, part of the 30S ribosomal subunit. Forms a tight heterodimer with protein bS6.

Functionally, binds as a heterodimer with protein bS6 to the central domain of the 16S rRNA, where it helps stabilize the platform of the 30S subunit. This Clostridium botulinum (strain 657 / Type Ba4) protein is Small ribosomal subunit protein bS18.